Here is a 612-residue protein sequence, read N- to C-terminus: Dihydroxy-acid dehydratase (612 aa).

Asp81 serves as a coordination point for Mg(2+). Residue Cys122 coordinates [2Fe-2S] cluster. Mg(2+)-binding residues include Asp123 and Lys124. Lys124 is subject to N6-carboxylysine. Cys193 serves as a coordination point for [2Fe-2S] cluster. Residue Glu489 coordinates Mg(2+). The active-site Proton acceptor is the Ser515.

This sequence belongs to the IlvD/Edd family. In terms of assembly, homodimer. [2Fe-2S] cluster is required as a cofactor. Mg(2+) serves as cofactor.

The catalysed reaction is (2R)-2,3-dihydroxy-3-methylbutanoate = 3-methyl-2-oxobutanoate + H2O. The enzyme catalyses (2R,3R)-2,3-dihydroxy-3-methylpentanoate = (S)-3-methyl-2-oxopentanoate + H2O. It participates in amino-acid biosynthesis; L-isoleucine biosynthesis; L-isoleucine from 2-oxobutanoate: step 3/4. Its pathway is amino-acid biosynthesis; L-valine biosynthesis; L-valine from pyruvate: step 3/4. In terms of biological role, functions in the biosynthesis of branched-chain amino acids. Catalyzes the dehydration of (2R,3R)-2,3-dihydroxy-3-methylpentanoate (2,3-dihydroxy-3-methylvalerate) into 2-oxo-3-methylpentanoate (2-oxo-3-methylvalerate) and of (2R)-2,3-dihydroxy-3-methylbutanoate (2,3-dihydroxyisovalerate) into 2-oxo-3-methylbutanoate (2-oxoisovalerate), the penultimate precursor to L-isoleucine and L-valine, respectively. This Teredinibacter turnerae (strain ATCC 39867 / T7901) protein is Dihydroxy-acid dehydratase.